Here is a 147-residue protein sequence, read N- to C-terminus: Cyanate hydratase (147 aa).

Catalysis depends on residues Arg88, Glu91, and Ser114.

It belongs to the cyanase family.

The enzyme catalyses cyanate + hydrogencarbonate + 3 H(+) = NH4(+) + 2 CO2. Catalyzes the reaction of cyanate with bicarbonate to produce ammonia and carbon dioxide. In Prochlorococcus marinus (strain NATL2A), this protein is Cyanate hydratase.